A 226-amino-acid chain; its full sequence is Probable proteasome subunit beta type-7 (226 aa).

This sequence belongs to the peptidase T1B family. In terms of assembly, the 26S proteasome consists of a 20S proteasome core and two 19S regulatory subunits. The 20S proteasome core is composed of 28 subunits that are arranged in four stacked rings, resulting in a barrel-shaped structure. The two end rings are each formed by seven alpha subunits, and the two central rings are each formed by seven beta subunits. The catalytic chamber with the active sites is on the inside of the barrel.

It is found in the cytoplasm. The protein localises to the nucleus. In terms of biological role, non-catalytic component of the proteasome which degrades poly-ubiquitinated proteins in the cytoplasm and in the nucleus. It is essential for the regulated turnover of proteins and for the removal of misfolded proteins. The proteasome is a multicatalytic proteinase complex that is characterized by its ability to cleave peptides with Arg, Phe, Tyr, Leu, and Glu adjacent to the leaving group at neutral or slightly basic pH. It has an ATP-dependent proteolytic activity. This is Probable proteasome subunit beta type-7 (PRE4) from Encephalitozoon cuniculi (strain GB-M1) (Microsporidian parasite).